The following is a 347-amino-acid chain: Adenine deaminase (347 aa).

The Zn(2+) site is built by histidine 16, histidine 18, and histidine 204. The Proton donor role is filled by glutamate 207. Aspartate 285 serves as a coordination point for Zn(2+). Aspartate 286 contacts substrate.

The protein belongs to the metallo-dependent hydrolases superfamily. Adenosine and AMP deaminases family. Adenine deaminase type 2 subfamily. Zn(2+) is required as a cofactor. Post-translationally, probably ubiquitinated when cells enter quiescence in response to nutrient limitation, since it is specifically degraded via a process requiring the F-box protein SAF1 and components of the SKP1-Cullin-F-box complex.

The protein localises to the cytoplasm. Its subcellular location is the nucleus. It carries out the reaction adenine + H2O + H(+) = hypoxanthine + NH4(+). Its function is as follows. Catalyzes the hydrolytic deamination of adenine to hypoxanthine. Plays an important role in the purine salvage pathway and in nitrogen catabolism. Also exhibits a low activity towards N(6)-substituted adenines that are commonly known as the plant hormones cytokinins. This chain is Adenine deaminase, found in Saccharomyces cerevisiae (strain ATCC 204508 / S288c) (Baker's yeast).